Reading from the N-terminus, the 150-residue chain is Large ribosomal subunit protein bL9 (150 aa).

The protein belongs to the bacterial ribosomal protein bL9 family.

Its function is as follows. Binds to the 23S rRNA. In Polynucleobacter necessarius subsp. necessarius (strain STIR1), this protein is Large ribosomal subunit protein bL9.